Consider the following 217-residue polypeptide: Deoxyribose-phosphate aldolase (217 aa).

The active-site Proton donor/acceptor is Asp95. Lys156 functions as the Schiff-base intermediate with acetaldehyde in the catalytic mechanism. Lys184 (proton donor/acceptor) is an active-site residue.

This sequence belongs to the DeoC/FbaB aldolase family. DeoC type 1 subfamily.

Its subcellular location is the cytoplasm. It catalyses the reaction 2-deoxy-D-ribose 5-phosphate = D-glyceraldehyde 3-phosphate + acetaldehyde. Its pathway is carbohydrate degradation; 2-deoxy-D-ribose 1-phosphate degradation; D-glyceraldehyde 3-phosphate and acetaldehyde from 2-deoxy-alpha-D-ribose 1-phosphate: step 2/2. Catalyzes a reversible aldol reaction between acetaldehyde and D-glyceraldehyde 3-phosphate to generate 2-deoxy-D-ribose 5-phosphate. The sequence is that of Deoxyribose-phosphate aldolase from Thermosynechococcus vestitus (strain NIES-2133 / IAM M-273 / BP-1).